A 171-amino-acid chain; its full sequence is Inosine/xanthosine triphosphatase (171 aa).

8–13 (TTNPAK) is a substrate binding site. Mg(2+)-binding residues include D38 and Q68.

Belongs to the YjjX NTPase family. As to quaternary structure, homodimer. Mg(2+) is required as a cofactor. The cofactor is Mn(2+).

It carries out the reaction XTP + H2O = XDP + phosphate + H(+). It catalyses the reaction ITP + H2O = IDP + phosphate + H(+). In terms of biological role, phosphatase that hydrolyzes non-canonical purine nucleotides such as XTP and ITP to their respective diphosphate derivatives. Probably excludes non-canonical purines from DNA/RNA precursor pool, thus preventing their incorporation into DNA/RNA and avoiding chromosomal lesions. The protein is Inosine/xanthosine triphosphatase of Cronobacter sakazakii (strain ATCC BAA-894) (Enterobacter sakazakii).